A 337-amino-acid chain; its full sequence is LIX1-like protein (337 aa).

The segment at 1 to 64 (METMRAQRLQ…PLLLSGAPGL (64 aa)) is disordered. The span at 26–38 (PGVTGAAAATATP) shows a compositional bias: low complexity. Residues 39–56 (PAGPPPAPPPPAPPPPPL) are compositionally biased toward pro residues.

It belongs to the LIX1 family.

The chain is LIX1-like protein (LIX1L) from Homo sapiens (Human).